We begin with the raw amino-acid sequence, 250 residues long: Ribonuclease PH (250 aa).

Residues R99 and 137-139 contribute to the phosphate site; that span reads GTR.

This sequence belongs to the RNase PH family. In terms of assembly, homohexameric ring arranged as a trimer of dimers.

The enzyme catalyses tRNA(n+1) + phosphate = tRNA(n) + a ribonucleoside 5'-diphosphate. In terms of biological role, phosphorolytic 3'-5' exoribonuclease that plays an important role in tRNA 3'-end maturation. Removes nucleotide residues following the 3'-CCA terminus of tRNAs; can also add nucleotides to the ends of RNA molecules by using nucleoside diphosphates as substrates, but this may not be physiologically important. Probably plays a role in initiation of 16S rRNA degradation (leading to ribosome degradation) during starvation. The chain is Ribonuclease PH from Bordetella parapertussis (strain 12822 / ATCC BAA-587 / NCTC 13253).